The chain runs to 125 residues: Small ribosomal subunit protein uS11 (125 aa).

The disordered stretch occupies residues 101–125 (KDVKDVTPTPHNGTRPPKKILKREK). A compositionally biased stretch (basic residues) spans 116–125 (PPKKILKREK).

The protein belongs to the universal ribosomal protein uS11 family. As to quaternary structure, part of the 30S ribosomal subunit. Interacts with proteins S7 and S18. Binds to IF-3.

Its function is as follows. Located on the platform of the 30S subunit, it bridges several disparate RNA helices of the 16S rRNA. Forms part of the Shine-Dalgarno cleft in the 70S ribosome. This chain is Small ribosomal subunit protein uS11, found in Mycoplasma sp.